The chain runs to 139 residues: D-ribose pyranase (139 aa).

H20 acts as the Proton donor in catalysis. Residues D28, H106, and 128–130 (YAN) each bind substrate.

Belongs to the RbsD / FucU family. RbsD subfamily. In terms of assembly, homodecamer.

The protein localises to the cytoplasm. It catalyses the reaction beta-D-ribopyranose = beta-D-ribofuranose. Its pathway is carbohydrate metabolism; D-ribose degradation; D-ribose 5-phosphate from beta-D-ribopyranose: step 1/2. Functionally, catalyzes the interconversion of beta-pyran and beta-furan forms of D-ribose. In Shewanella halifaxensis (strain HAW-EB4), this protein is D-ribose pyranase.